The chain runs to 1404 residues: DNA-directed RNA polymerase subunit beta' (1404 aa).

Zn(2+) contacts are provided by Cys-72, Cys-74, Cys-87, and Cys-90. The Mg(2+) site is built by Asp-462, Asp-464, and Asp-466. 4 residues coordinate Zn(2+): Cys-816, Cys-890, Cys-897, and Cys-900.

The protein belongs to the RNA polymerase beta' chain family. The RNAP catalytic core consists of 2 alpha, 1 beta, 1 beta' and 1 omega subunit. When a sigma factor is associated with the core the holoenzyme is formed, which can initiate transcription. Mg(2+) is required as a cofactor. The cofactor is Zn(2+).

The enzyme catalyses RNA(n) + a ribonucleoside 5'-triphosphate = RNA(n+1) + diphosphate. Its function is as follows. DNA-dependent RNA polymerase catalyzes the transcription of DNA into RNA using the four ribonucleoside triphosphates as substrates. The protein is DNA-directed RNA polymerase subunit beta' of Azoarcus sp. (strain BH72).